We begin with the raw amino-acid sequence, 202 residues long: Hydrogenase expression/formation protein HupD (202 aa).

Positions 28, 74, and 105 each coordinate Ni(2+).

This sequence belongs to the peptidase A31 family.

Functionally, not known. Could be involved in the processing of hydrogenase. In Rhizobium leguminosarum bv. viciae, this protein is Hydrogenase expression/formation protein HupD (hupD).